Reading from the N-terminus, the 452-residue chain is Pup--protein ligase (452 aa).

E9 serves as a coordination point for Mg(2+). R53 contributes to the ATP binding site. Y55 is a Mg(2+) binding site. Catalysis depends on D57, which acts as the Proton acceptor. E63 lines the Mg(2+) pocket. ATP contacts are provided by T66 and W419.

It belongs to the Pup ligase/Pup deamidase family. Pup-conjugating enzyme subfamily.

The enzyme catalyses ATP + [prokaryotic ubiquitin-like protein]-L-glutamate + [protein]-L-lysine = ADP + phosphate + N(6)-([prokaryotic ubiquitin-like protein]-gamma-L-glutamyl)-[protein]-L-lysine.. Its pathway is protein degradation; proteasomal Pup-dependent pathway. It participates in protein modification; protein pupylation. Functionally, catalyzes the covalent attachment of the prokaryotic ubiquitin-like protein modifier Pup to the proteasomal substrate proteins, thereby targeting them for proteasomal degradation. This tagging system is termed pupylation. The ligation reaction involves the side-chain carboxylate of the C-terminal glutamate of Pup and the side-chain amino group of a substrate lysine. This is Pup--protein ligase from Geodermatophilus obscurus (strain ATCC 25078 / DSM 43160 / JCM 3152 / CCUG 61914 / KCC A-0152 / KCTC 9177 / NBRC 13315 / NRRL B-3577 / G-20).